Reading from the N-terminus, the 481-residue chain is Multiple inositol polyphosphate phosphatase 1 (481 aa).

The first 30 residues, 1-30 (MLRGARSHLPASVAPAAVLAAALLSSFARC), serve as a signal peptide directing secretion. Histidine 89 is an active-site residue. Residues asparagine 236 and asparagine 475 are each glycosylated (N-linked (GlcNAc...) asparagine). The Prevents secretion from ER signature appears at 478–481 (SDEL).

This sequence belongs to the histidine acid phosphatase family. MINPP1 subfamily. Post-translationally, N-glycosylated. As to expression, widely expressed with highest levels in kidney, intestine, thymus and liver.

The protein resides in the endoplasmic reticulum lumen. It is found in the secreted. Its subcellular location is the cell membrane. The enzyme catalyses 1D-myo-inositol hexakisphosphate + H2O = 1D-myo-inositol 1,2,4,5,6-pentakisphosphate + phosphate. It catalyses the reaction 1D-myo-inositol 1,2,4,5,6-pentakisphosphate + H2O = 1D-myo-inositol 1,2,5,6-tetrakisphosphate + phosphate. It carries out the reaction 1D-myo-inositol 1,2,5,6-tetrakisphosphate + H2O = 1D-myo-inositol 1,2,6-trisphosphate + phosphate. The catalysed reaction is 1D-myo-inositol 1,2,6-trisphosphate + H2O = 1D-myo-inositol 1,2-bisphosphate + phosphate. The enzyme catalyses 1D-myo-inositol 1,2-bisphosphate + H2O = 1D-myo-inositol 2-phosphate + phosphate. It catalyses the reaction 1D-myo-inositol hexakisphosphate + H2O = 1D-myo-inositol 1,2,3,5,6-pentakisphosphate + phosphate. It carries out the reaction 1D-myo-inositol 1,2,3,5,6-pentakisphosphate + H2O = 1D-myo-inositol 1,2,3,6-tetrakisphosphate + phosphate. The catalysed reaction is 1D-myo-inositol 1,2,3,6-tetrakisphosphate + H2O = 1D-myo-inositol 1,2,3-trisphosphate + phosphate. The enzyme catalyses 1D-myo-inositol 1,2,3-trisphosphate + H2O = 1D-myo-inositol 2,3-bisphosphate + phosphate. It catalyses the reaction 1D-myo-inositol 2,3-bisphosphate + H2O = 1D-myo-inositol 2-phosphate + phosphate. It carries out the reaction 1D-myo-inositol 1,3,4,5,6-pentakisphosphate + H2O = 1D-myo-inositol 1,4,5,6-tetrakisphosphate + phosphate. The catalysed reaction is 1D-myo-inositol 1,4,5,6-tetrakisphosphate + H2O = 1D-myo-inositol 1,4,5-trisphosphate + phosphate. The enzyme catalyses (2R)-2,3-bisphosphoglycerate + H2O = (2R)-2-phosphoglycerate + phosphate. Its function is as follows. Multiple inositol polyphosphate phosphatase that hydrolyzes 1D-myo-inositol 1,3,4,5,6-pentakisphosphate (InsP5[2OH]) and 1D-myo-inositol hexakisphosphate (InsP6) to a range of less phosphorylated inositol phosphates. This regulates the availability of these various small molecule second messengers and metal chelators which control many aspects of cell physiology. Has a weak in vitro activity towards 1D-myo-inositol 1,4,5-trisphosphate which is unlikely to be physiologically relevant. By regulating intracellular inositol polyphosphates pools, which act as metal chelators, it may control the availability of intracellular calcium and iron, which are important for proper neuronal development and homeostasis. May have a dual substrate specificity, and function as a 2,3-bisphosphoglycerate 3-phosphatase hydrolyzing 2,3-bisphosphoglycerate to 2-phosphoglycerate. 2,3-bisphosphoglycerate (BPG) is formed as part of the Rapoport-Luebering glycolytic bypass and is a regulator of systemic oxygen homeostasis as the major allosteric effector of hemoglobin. This Mus musculus (Mouse) protein is Multiple inositol polyphosphate phosphatase 1.